The sequence spans 276 residues: NAD kinase (276 aa).

Aspartate 61 (proton acceptor) is an active-site residue. Residues 61 to 62 (DG), 134 to 135 (ND), arginine 145, lysine 162, aspartate 164, valine 172, 175 to 180 (TAYSFS), and glutamine 234 contribute to the NAD(+) site.

Belongs to the NAD kinase family. A divalent metal cation is required as a cofactor.

It localises to the cytoplasm. The catalysed reaction is NAD(+) + ATP = ADP + NADP(+) + H(+). Functionally, involved in the regulation of the intracellular balance of NAD and NADP, and is a key enzyme in the biosynthesis of NADP. Catalyzes specifically the phosphorylation on 2'-hydroxyl of the adenosine moiety of NAD to yield NADP. The protein is NAD kinase of Clostridium perfringens (strain ATCC 13124 / DSM 756 / JCM 1290 / NCIMB 6125 / NCTC 8237 / Type A).